The chain runs to 141 residues: Ribosomal RNA large subunit methyltransferase H (141 aa).

Glycine 88 is an S-adenosyl-L-methionine binding site.

Belongs to the RNA methyltransferase RlmH family. Homodimer.

It is found in the cytoplasm. The catalysed reaction is pseudouridine(1915) in 23S rRNA + S-adenosyl-L-methionine = N(3)-methylpseudouridine(1915) in 23S rRNA + S-adenosyl-L-homocysteine + H(+). Its function is as follows. Specifically methylates the pseudouridine at position 1915 (m3Psi1915) in 23S rRNA. The sequence is that of Ribosomal RNA large subunit methyltransferase H from Novosphingobium aromaticivorans (strain ATCC 700278 / DSM 12444 / CCUG 56034 / CIP 105152 / NBRC 16084 / F199).